Here is a 470-residue protein sequence, read N- to C-terminus: ATP synthase subunit beta (470 aa).

158-165 (GGAGVGKT) contributes to the ATP binding site.

It belongs to the ATPase alpha/beta chains family. As to quaternary structure, F-type ATPases have 2 components, CF(1) - the catalytic core - and CF(0) - the membrane proton channel. CF(1) has five subunits: alpha(3), beta(3), gamma(1), delta(1), epsilon(1). CF(0) has three main subunits: a(1), b(2) and c(9-12). The alpha and beta chains form an alternating ring which encloses part of the gamma chain. CF(1) is attached to CF(0) by a central stalk formed by the gamma and epsilon chains, while a peripheral stalk is formed by the delta and b chains.

It localises to the cell membrane. The catalysed reaction is ATP + H2O + 4 H(+)(in) = ADP + phosphate + 5 H(+)(out). Its function is as follows. Produces ATP from ADP in the presence of a proton gradient across the membrane. The catalytic sites are hosted primarily by the beta subunits. The polypeptide is ATP synthase subunit beta (Shouchella clausii (strain KSM-K16) (Alkalihalobacillus clausii)).